Consider the following 585-residue polypeptide: MKRTHYCGELTRELVGKKVVLKGWADNRRDHGKLIFIDMRDNSGLVQVVCDFESNPEALEVADSVRSEYVLEITGTVRERSPENVNPDLKTGEIEVDCEDINVLNTSKTPPFFINENVDVDENIRLKYRYLDLRRPSMQNNIYLRHKITKLVRDFLDENGFIEVETPMLTKSTPEGARDFLVPSRLHEGSFYALPQSPQLFKQLLMASGVEKYFQIARCFRDEDLRADRQPEFSQIDIEMSFFEQEEFMKLMENMVSKLFKEVLGIELTKPFPRITYQEAMDRYGSDSPDLRYGLELHDVSDLVKDAEFKVFRETVASEGQVKGIAVPQGQEFSRKEIDDLTEFVKEFGAKGLAWMVLEEEEIKSPIAKFFSDEELDGIIDRMGANTGDLLLFVADEPEIVADSLSKLREHLANKLDLIPSNEYQLTWVIDFPLMEYDKDEGRYKALHHPFTSPYEDDLEKYENEPEKIRAKAYDLVLNGVEIGGGSMRIHQKELQEKMFEFLGIPLEEAKQKFGFLFEAFEYGTPPHGGIAFGLDRLVMLFTGSQSIRDVIAFPKTANASCLMTEAPAKVDENQLKELHLKTTK.

Glu175 serves as a coordination point for L-aspartate. Residues 199–202 (QLFK) are aspartate. Residue Arg221 coordinates L-aspartate. ATP is bound by residues 221–223 (RDE) and Gln230. His448 serves as a coordination point for L-aspartate. ATP is bound at residue Glu482. L-aspartate is bound at residue Arg489. 534-537 (GLDR) serves as a coordination point for ATP.

Belongs to the class-II aminoacyl-tRNA synthetase family. Type 1 subfamily. As to quaternary structure, homodimer.

It is found in the cytoplasm. It catalyses the reaction tRNA(Asx) + L-aspartate + ATP = L-aspartyl-tRNA(Asx) + AMP + diphosphate. Aspartyl-tRNA synthetase with relaxed tRNA specificity since it is able to aspartylate not only its cognate tRNA(Asp) but also tRNA(Asn). Reaction proceeds in two steps: L-aspartate is first activated by ATP to form Asp-AMP and then transferred to the acceptor end of tRNA(Asp/Asn). The protein is Aspartate--tRNA(Asp/Asn) ligase of Natranaerobius thermophilus (strain ATCC BAA-1301 / DSM 18059 / JW/NM-WN-LF).